The sequence spans 235 residues: MMIMNNFDEKKLIQEFSKIQSELSPRIKLENNFQIEEIQFIAGVDLAYWNVNKTKYGTCCIVIIDYGTKEVVEKVYSYGEIPIPYIPGFLAFRELPLIIEAVKKLTKQPDIYFFDGNGYLHYRHMGIATHASFLLNKPTIGVAKSYLKIRDVDFIMPENLKGSYTDIVINNEVYGRTLRTTKNVKPIFVSCGNWIDLDTSTEIVMNCINNESRLPIPVRLADLETHKMRKKLMEG.

Mg(2+) contacts are provided by Asp45 and Asp115.

It belongs to the endonuclease V family. The cofactor is Mg(2+).

The protein localises to the cytoplasm. It catalyses the reaction Endonucleolytic cleavage at apurinic or apyrimidinic sites to products with a 5'-phosphate.. DNA repair enzyme involved in the repair of deaminated bases. Selectively cleaves double-stranded DNA at the second phosphodiester bond 3' to a deoxyinosine leaving behind the intact lesion on the nicked DNA. This is Endonuclease V from Bacillus thuringiensis subsp. konkukian (strain 97-27).